Here is a 110-residue protein sequence, read N- to C-terminus: Parvalbumin alpha (110 aa).

At Ser-2 the chain carries N-acetylserine. 2 positions are modified to phosphoserine: Ser-2 and Ser-24. 2 EF-hand domains span residues 39 to 74 (KSADDVKKVFHILDKDKSGFIEEDELGFILKGFSPD) and 78 to 110 (LSAKETKTLMAAGDKDGDGKIGVDEFSTLVAES). The Ca(2+) site is built by Asp-52, Asp-54, Ser-56, Phe-58, Glu-60, Glu-63, Asp-91, Asp-93, Asp-95, Lys-97, and Glu-102.

The protein belongs to the parvalbumin family.

Its function is as follows. In muscle, parvalbumin is thought to be involved in relaxation after contraction. It binds two calcium ions. This chain is Parvalbumin alpha (PVALB), found in Macaca fuscata fuscata (Japanese macaque).